The primary structure comprises 737 residues: Zinc finger protein 585A (737 aa).

The region spanning 1-65 (MAAPTREEWR…QGERPRQSCP (65 aa)) is the KRAB domain. 6 consecutive C2H2-type zinc fingers follow at residues 126-148 (YVCI…QKTH), 154-176 (FKCN…QRIH), 182-204 (YECS…EKIH), 210-232 (HECT…QKIH), 238-260 (YICI…RRIH), and 266-288 (YECS…QRVH). A C2H2-type 7; degenerate zinc finger spans residues 294 to 316 (YICTEYGKVFSNNSNLITHKKVQ). C2H2-type zinc fingers lie at residues 322-344 (SICT…QRIH), 350-372 (YACS…QRIH), 378-400 (YICM…QIIH), 406-428 (YKCG…KRIH), 434-456 (YMCN…QKTH), 462-484 (YICS…QRIH), 490-512 (YECS…QKIH), 518-540 (YECH…QKIH), 546-568 (YVCT…QRIH), 574-596 (YECS…QPLH), 602-624 (YVCA…QKTH), 630-652 (YICS…HRIH), 658-680 (YECS…QRIH), 686-708 (YVCA…QTTH), and 714-736 (YKCG…QSNH).

The protein belongs to the krueppel C2H2-type zinc-finger protein family.

The protein resides in the nucleus. In terms of biological role, may be involved in transcriptional regulation. The chain is Zinc finger protein 585A (ZNF585A) from Pongo abelii (Sumatran orangutan).